The chain runs to 179 residues: Translation initiation factor IF-3 (179 aa).

The protein belongs to the IF-3 family. Monomer.

The protein resides in the cytoplasm. Functionally, IF-3 binds to the 30S ribosomal subunit and shifts the equilibrium between 70S ribosomes and their 50S and 30S subunits in favor of the free subunits, thus enhancing the availability of 30S subunits on which protein synthesis initiation begins. This Buchnera aphidicola subsp. Schizaphis graminum (strain Sg) protein is Translation initiation factor IF-3.